The following is a 291-amino-acid chain: Phytanoyl-CoA dioxygenase domain-containing protein 1 (291 aa).

2-oxoglutarate is bound by residues K102, M141, 156–158 (HQD), and W174. Residues H156 and D158 each coordinate Fe cation. Residue H246 coordinates Fe cation. 2-oxoglutarate-binding residues include S248 and R257.

This sequence belongs to the PhyH family. PHYHD1 subfamily. Requires Fe cation as cofactor.

Functionally, 2-oxoglutarate(2OG)-dependent dioxygenase that catalyzes the conversion of 2-oxoglutarate to succinate and CO(2) in an iron-dependent manner. However, does not couple 2OG turnover to the hydroxylation of acyl-coenzyme A derivatives, implying that it is not directly involved in phytanoyl coenzyme-A metabolism. Does not show detectable activity towards fatty acid CoA thioesters. The chain is Phytanoyl-CoA dioxygenase domain-containing protein 1 (phyhd1) from Danio rerio (Zebrafish).